Consider the following 765-residue polypeptide: Putative chloride channel-like protein CLC-g (765 aa).

12 helical membrane passes run 67 to 87 (VFMK…IGFA), 116 to 136 (FVVF…ITAF), 167 to 187 (LIIK…IGKA), 190 to 210 (MVHT…KRYR), 232 to 252 (GAAA…LFAL), 262 to 282 (ALLW…RALI), 315 to 335 (VLPV…YNFL), 355 to 375 (ILLA…LPFL), 438 to 458 (FSVL…YGIV), 462 to 482 (GLFV…GMLL), 494 to 514 (AVLG…STCV), and 515 to 535 (ILLE…VLLI). Residues 568-640 (MRQLLVGDVV…LLKKRVFMPS (73 aa)) form the CBS 1 domain. The residue at position 646 (Ser-646) is a Phosphoserine. A CBS 2 domain is found at 687–748 (FSNASPYTVV…PEHILGLHPS (62 aa)). Residues 715–735 (HLLVIPKTSNRPPVVGILTRH) traverse the membrane as a helical segment.

The protein belongs to the chloride channel (TC 2.A.49) family. As to quaternary structure, homodimer. Interacts with PP2A5.

It is found in the membrane. Putative voltage-gated chloride channel. This Arabidopsis thaliana (Mouse-ear cress) protein is Putative chloride channel-like protein CLC-g (CLC-G).